A 206-amino-acid polypeptide reads, in one-letter code: MLKKINFIDINWNKVDNMLPVVIQHNLSGKVLMHGYMNQEALKRTQNEGIVTFYSRTKQRLWTKGETSKNFLYVTDIRLDCDQDALLIFVRPVGKTCHLNHVSCFQVPSENLFFLHDLDCMLKFKKHYGLENSYTFNLHKNGVNRIAQKVAEEAIETAISAVSKNKVELINESSDLVYHLLVLLHSYDLDLYDVIKNLKMRSNKQV.

The interval 1 to 114 (MLKKINFIDI…FQVPSENLFF (114 aa)) is phosphoribosyl-AMP cyclohydrolase. Positions 115–206 (LHDLDCMLKF…NLKMRSNKQV (92 aa)) are phosphoribosyl-ATP pyrophosphohydrolase.

In the N-terminal section; belongs to the PRA-CH family. The protein in the C-terminal section; belongs to the PRA-PH family.

The protein localises to the cytoplasm. It catalyses the reaction 1-(5-phospho-beta-D-ribosyl)-ATP + H2O = 1-(5-phospho-beta-D-ribosyl)-5'-AMP + diphosphate + H(+). The catalysed reaction is 1-(5-phospho-beta-D-ribosyl)-5'-AMP + H2O = 1-(5-phospho-beta-D-ribosyl)-5-[(5-phospho-beta-D-ribosylamino)methylideneamino]imidazole-4-carboxamide. It functions in the pathway amino-acid biosynthesis; L-histidine biosynthesis; L-histidine from 5-phospho-alpha-D-ribose 1-diphosphate: step 2/9. It participates in amino-acid biosynthesis; L-histidine biosynthesis; L-histidine from 5-phospho-alpha-D-ribose 1-diphosphate: step 3/9. The protein is Histidine biosynthesis bifunctional protein HisIE (hisI) of Buchnera aphidicola subsp. Baizongia pistaciae (strain Bp).